Here is a 396-residue protein sequence, read N- to C-terminus: Cathepsin D (396 aa).

The N-terminal stretch at 1–18 is a signal peptide; that stretch reads MKFLYLFLFAVFAWTSDA. A propeptide spans 19–61 (activation peptide); the sequence is IVRIPLKKFRSIRRTLSDSGLNVEQLLAGTNSLQHNQGFPSSN. Residues 76–393 enclose the Peptidase A1 domain; sequence YYGEIGLGTP…DRESNRVGFA (318 aa). Asp94 is a catalytic residue. Cys107 and Cys114 form a disulfide bridge. Asn131 is a glycosylation site (N-linked (GlcNAc...) asparagine). A disulfide bridge links Cys272 with Cys276. Asp281 is a catalytic residue. Residues Cys315 and Cys352 are joined by a disulfide bond.

This sequence belongs to the peptidase A1 family. As to quaternary structure, monomer.

The protein localises to the lysosome. It carries out the reaction Specificity similar to, but narrower than, that of pepsin A. Does not cleave the 4-Gln-|-His-5 bond in B chain of insulin.. With respect to regulation, inhibited by pepstatin. Acid protease active in intracellular protein breakdown. The polypeptide is Cathepsin D (ctsd) (Clupea harengus (Atlantic herring)).